Reading from the N-terminus, the 930-residue chain is Zn(2)-C6 fungal-type transcription factor FTF1c (930 aa).

A DNA-binding region (zn(2)-C6 fungal-type) is located at residues 137-164; sequence CIPCRRKKIRCSGEKPACEHCLRSYIPC.

It is found in the nucleus. Zn(2)-C6 fungal-type transcription factor that has a role in the establishment of the fungus within the plant and/or the progress of the disease. Regulates the expression of virulence factors such as SIX1 and SIX6. The protein is Zn(2)-C6 fungal-type transcription factor FTF1c of Fusarium oxysporum f. sp. lycopersici (strain 4287 / CBS 123668 / FGSC 9935 / NRRL 34936) (Fusarium vascular wilt of tomato).